A 784-amino-acid polypeptide reads, in one-letter code: Melanoma-associated antigen D1 (784 aa).

A disordered region spans residues 41–67 (PTNQATAAASGPNASPQSSQPPSANEV). A compositionally biased stretch (low complexity) spans 47 to 65 (AAASGPNASPQSSQPPSAN). Tyrosine 97 is modified (phosphotyrosine). 4 stretches are compositionally biased toward polar residues: residues 195-214 (PTAETQTQNINQAKMATSQA), 232-246 (AQTSADGSQAQNLES), 259-269 (NNLNVEESSSG), and 306-320 (LAWQNPSGWQNQPAR). The tract at residues 195-339 (PTAETQTQNI…PARQTPPAWQ (145 aa)) is disordered. 19 tandem repeats follow at residues 302-307 (WQTPLA), 308-313 (WQNPSG), 314-319 (WQNQPA), 338-343 (WQNPVA), 344-349 (WQNPVI), 350-355 (WPNPVI), 356-361 (WQNPVI), 362-367 (WPNPIV), 368-373 (WPGPVV), 374-379 (WPNPLA), 380-385 (WQNPPG), 386-391 (WQTPPG), 392-397 (WQTPPG), 398-403 (WQGPPD), 404-409 (WQGPPD), 410-415 (WPLPPD), 416-421 (WPLPPD), 422-427 (WPLPTD), and 428-433 (WPLPPD). The interval 302–450 (WQTPLAWQNP…VPPDWQNLRP (149 aa)) is 22 X 6 AA tandem repeats of W-[PQ]-X-P-X-X. The disordered stretch occupies residues 379–418 (AWQNPPGWQTPPGWQTPPGWQGPPDWQGPPDWPLPPDWPL). A compositionally biased stretch (low complexity) spans 383–403 (PPGWQTPPGWQTPPGWQGPPD). Pro residues predominate over residues 404 to 418 (WQGPPDWPLPPDWPL). One copy of the 20; approximate repeat lies at 434-438 (WIPTD). A run of 2 repeats spans residues 439-444 (WPVPPD) and 445-450 (WQNLRP). The disordered stretch occupies residues 441–471 (VPPDWQNLRPSPNLRPSPNSRASQNLGASQP). A compositionally biased stretch (low complexity) spans 447-461 (NLRPSPNLRPSPNSR). Positions 477-675 (LQERANKLVK…RDWTAQFMEA (199 aa)) constitute an MAGE domain.

As to quaternary structure, interacts with DLX5, DLX7 and MSX2 and forms homomultimers. Interacts with UNC5A. Interacts with TRIM28 and PJA1. Interacts with NGFR/p75NTR and RORA.

The protein localises to the cytoplasm. Its subcellular location is the cell membrane. It localises to the nucleus. Involved in the apoptotic response after nerve growth factor (NGF) binding in neuronal cells. Inhibits cell cycle progression, and facilitates NGFR-mediated apoptosis. May act as a regulator of the function of DLX family members. May enhance ubiquitin ligase activity of RING-type zinc finger-containing E3 ubiquitin-protein ligases. Proposed to act through recruitment and/or stabilization of the Ubl-conjugating enzyme (E2) at the E3:substrate complex. Plays a role in the circadian rhythm regulation. May act as RORA co-regulator, modulating the expression of core clock genes such as BMAL1 and NFIL3, induced, or NR1D1, repressed. The sequence is that of Melanoma-associated antigen D1 (MAGED1) from Sus scrofa (Pig).